Reading from the N-terminus, the 432-residue chain is 3-phosphoshikimate 1-carboxyvinyltransferase (432 aa).

3 residues coordinate 3-phosphoshikimate: lysine 23, serine 24, and arginine 28. Lysine 23 contacts phosphoenolpyruvate. Glycine 95 and arginine 123 together coordinate phosphoenolpyruvate. 3-phosphoshikimate-binding residues include serine 167, glutamine 169, aspartate 317, and lysine 344. Glutamine 169 is a phosphoenolpyruvate binding site. Aspartate 317 serves as the catalytic Proton acceptor. 2 residues coordinate phosphoenolpyruvate: arginine 348 and arginine 390.

Belongs to the EPSP synthase family. Monomer.

It localises to the cytoplasm. It catalyses the reaction 3-phosphoshikimate + phosphoenolpyruvate = 5-O-(1-carboxyvinyl)-3-phosphoshikimate + phosphate. Its pathway is metabolic intermediate biosynthesis; chorismate biosynthesis; chorismate from D-erythrose 4-phosphate and phosphoenolpyruvate: step 6/7. Its function is as follows. Catalyzes the transfer of the enolpyruvyl moiety of phosphoenolpyruvate (PEP) to the 5-hydroxyl of shikimate-3-phosphate (S3P) to produce enolpyruvyl shikimate-3-phosphate and inorganic phosphate. The polypeptide is 3-phosphoshikimate 1-carboxyvinyltransferase (Staphylococcus aureus (strain N315)).